Consider the following 136-residue polypeptide: Antistasin (136 aa).

The N-terminal stretch at 1 to 17 (MIKLAILLLFTVAIVRC) is a signal peptide. A Pyrrolidone carboxylic acid modification is found at Q18. Intrachain disulfides connect C25-C36, C30-C43, C45-C65, C50-C68, C54-C70, C79-C90, C84-C97, C99-C120, C105-C123, and C109-C125. The 26-residue stretch at 45–70 (CSGVRCRMHCPHGFQRSRYGCEFCKC) folds into the Antistasin-like 1 domain. The Antistasin-like 2 domain occupies 100–125 (KIDINCRKTCPNGLKRDKLGCEYCEC). Residues 114–117 (KRDK) and 128–135 (KRKLIPRL) contribute to the heparin site.

This sequence belongs to the protease inhibitor I15 (antistasin) family.

The protein localises to the secreted. This highly disulfide-bonded protein is a potent inhibitor of factor Xa. May have therapeutic utility as an anticoagulant. Also exhibits a strong metastatic activity. The chain is Antistasin from Haementeria officinalis (Mexican leech).